Here is a 365-residue protein sequence, read N- to C-terminus: UDP-N-acetylglucosamine--N-acetylmuramyl-(pentapeptide) pyrophosphoryl-undecaprenol N-acetylglucosamine transferase (365 aa).

UDP-N-acetyl-alpha-D-glucosamine-binding positions include 17 to 19, N129, R167, S194, I250, 269 to 274, and Q295; these read TGG and ALTVSE.

This sequence belongs to the glycosyltransferase 28 family. MurG subfamily.

The protein resides in the cell inner membrane. It carries out the reaction di-trans,octa-cis-undecaprenyl diphospho-N-acetyl-alpha-D-muramoyl-L-alanyl-D-glutamyl-meso-2,6-diaminopimeloyl-D-alanyl-D-alanine + UDP-N-acetyl-alpha-D-glucosamine = di-trans,octa-cis-undecaprenyl diphospho-[N-acetyl-alpha-D-glucosaminyl-(1-&gt;4)]-N-acetyl-alpha-D-muramoyl-L-alanyl-D-glutamyl-meso-2,6-diaminopimeloyl-D-alanyl-D-alanine + UDP + H(+). It participates in cell wall biogenesis; peptidoglycan biosynthesis. Cell wall formation. Catalyzes the transfer of a GlcNAc subunit on undecaprenyl-pyrophosphoryl-MurNAc-pentapeptide (lipid intermediate I) to form undecaprenyl-pyrophosphoryl-MurNAc-(pentapeptide)GlcNAc (lipid intermediate II). The protein is UDP-N-acetylglucosamine--N-acetylmuramyl-(pentapeptide) pyrophosphoryl-undecaprenol N-acetylglucosamine transferase of Shewanella woodyi (strain ATCC 51908 / MS32).